The primary structure comprises 299 residues: Prohibitin-2 (299 aa).

An N-acetylalanine modification is found at Ala-2. Residues Met-19 to Ala-49 are necessary for transcriptional repression. Tyr-128 carries the post-translational modification Phosphotyrosine. At Lys-147 the chain carries N6-acetyllysine. A necessary for transcriptional repression region spans residues Ala-150–Asp-174. The residue at position 151 (Ser-151) is a Phosphoserine. The stretch at Ser-190–Leu-238 forms a coiled coil. Lys-200, Lys-236, Lys-250, and Lys-262 each carry N6-acetyllysine.

The protein belongs to the prohibitin family. As to quaternary structure, the mitochondrial prohibitin complex consists of two subunits (PHB1 and PHB2), assembled into a membrane-associated ring-shaped supercomplex of approximately 1 mDa. Interacts with ESR1, HDAC1 and HDAC5. Interacts with ZNF703. Interacts with STOML2. Interacts with ARFGEF3. Interacts with SPHK2. Interacts with COX4I1; the interaction associates PHB2 with COX. Interacts with MAP1LC3B (membrane-bound form LC3-II); the interaction is direct and upon mitochondrial depolarization and proteasome-dependent outer membrane rupture. Interacts with IGFBP6 (via C-terminal domain). Interacts with CLPB. Interacts with CD86 (via cytoplasmic domain); the interactions increases after priming with CD40. Interacts with AFG3L2. Interacts with DNAJC19. Interacts with AKT2; this interaction may be important for myogenic differentiation. In terms of processing, phosphorylated. Tyrosine phosphorylation is indirectly stimulated by IGFBP6.

Its subcellular location is the mitochondrion inner membrane. The protein resides in the cytoplasm. The protein localises to the nucleus. It localises to the cell membrane. Functionally, protein with pleiotropic attributes mediated in a cell-compartment- and tissue-specific manner, which include the plasma membrane-associated cell signaling functions, mitochondrial chaperone, and transcriptional co-regulator of transcription factors and sex steroid hormones in the nucleus. Its function is as follows. In the mitochondria, together with PHB, forms large ring complexes (prohibitin complexes) in the inner mitochondrial membrane (IMM) and functions as a chaperone protein that stabilizes mitochondrial respiratory enzymes and maintains mitochondrial integrity in the IMM, which is required for mitochondrial morphogenesis, neuronal survival, and normal lifespan. The prohibitin complex, with DNAJC19, regulates cardiolipin remodeling and the protein turnover of OMA1 in a cardiolipin-binding manner. Also regulates cytochrome-c oxidase assembly (COX) and mitochondrial respiration. Binding to sphingoid 1-phosphate (SPP) modulates its regulator activity. Has a key role of mitophagy receptor involved in targeting mitochondria for autophagic degradation. Involved in mitochondrial-mediated antiviral innate immunity, activates RIG-I-mediated signal transduction and production of IFNB1 and pro-inflammatory cytokine IL6. In terms of biological role, in the nucleus, serves as transcriptional co-regulator. Acts as a mediator of transcriptional repression by nuclear hormone receptors via recruitment of histone deacetylases. Functions as an estrogen receptor (ER)-selective coregulator that potentiates the inhibitory activities of antiestrogens and represses the activity of estrogens. Competes with NCOA1 for modulation of ER transcriptional activity. In the plasma membrane, is involved in IGFBP6-induced cell migration. Cooperates with CD86 to mediate CD86-signaling in B lymphocytes that regulates the level of IgG1 produced through the activation of distal signaling intermediates. Upon CD40 engagement, required to activate NF-kappa-B signaling pathway via phospholipase C and protein kinase C activation. This is Prohibitin-2 from Rattus norvegicus (Rat).